A 348-amino-acid chain; its full sequence is N-formyl peptide receptor 2 (348 aa).

N-linked (GlcNAc...) asparagine glycosylation occurs at asparagine 1. Over 1–24 the chain is Extracellular; it reads NFSTPLNEHEEVSYESAGYTVLQI. A helical transmembrane segment spans residues 25–47; it reads LPLVVLGVTFVLGVLGNGLVIWV. Residues 48 to 58 are Cytoplasmic-facing; the sequence is AGFRMTRTVTT. The helical transmembrane segment at 59-80 threads the bilayer; that stretch reads ICYLNLPLADFSFTATLPFLIV. Residues 81–97 lie on the Extracellular side of the membrane; it reads SMAMGEKWPFGWFLCKL. Residues cysteine 95 and cysteine 173 are joined by a disulfide bond. The helical transmembrane segment at 98–118 threads the bilayer; it reads IHIVVDINLFGSVFLIGFIAL. The Cytoplasmic portion of the chain corresponds to 119–137; sequence DRCICVLHPVWAQNHRTVS. The helical transmembrane segment at 138 to 159 threads the bilayer; the sequence is LAMKVIIGPWILALVLTLPVFL. Residues 160–202 are Extracellular-facing; it reads FLTTVTIPNGDTYCTFNFASWGGTPEERKNVAITMLTARGIIR. The chain crosses the membrane as a helical span at residues 203–223; it reads FVIGFSMPMSIVAICYGLIAA. Residues 224-239 are Cytoplasmic-facing; the sequence is KIHKKGMIKSSRPLRV. A helical membrane pass occupies residues 240–263; that stretch reads LTAVVASFFICWFPFQLVALLSTV. The Extracellular segment spans residues 264-283; that stretch reads WLKEMLFYGKYKIINILVNP. The helical transmembrane segment at 284 to 303 threads the bilayer; it reads TSSLAFFNSCLNPMLYVFVG. The Cytoplasmic segment spans residues 304–348; the sequence is QDFRERLIRSLPTSLERALSEDSAPTNDTAAKCASPPAETELQAM. The disordered stretch occupies residues 323–348; the sequence is SEDSAPTNDTAAKCASPPAETELQAM.

It belongs to the G-protein coupled receptor 1 family. In terms of assembly, interacts with APP; the interaction takes place at the cell surface and the complex is then rapidly internalized.

It localises to the cell membrane. Functionally, low affinity receptor for N-formyl-methionyl peptides, which are powerful neutrophil chemotactic factors. Binding of FMLP to the receptor causes activation of neutrophils. This response is mediated via a G-protein that activates a phosphatidylinositol-calcium second messenger system. Receptor for the chemokine-like protein FAM19A5, mediating FAM19A5-stimulated macrophage chemotaxis and the inhibitory effect on TNFSF11/RANKL-induced osteoclast differentiation. The polypeptide is N-formyl peptide receptor 2 (FPR2) (Pongo pygmaeus (Bornean orangutan)).